The sequence spans 264 residues: 3-methyl-2-oxobutanoate hydroxymethyltransferase (264 aa).

Aspartate 45 and aspartate 84 together coordinate Mg(2+). 3-methyl-2-oxobutanoate contacts are provided by residues 45–46 (DS), aspartate 84, and lysine 112. Glutamate 114 contributes to the Mg(2+) binding site. The Proton acceptor role is filled by glutamate 181.

Belongs to the PanB family. As to quaternary structure, homodecamer; pentamer of dimers. The cofactor is Mg(2+).

It is found in the cytoplasm. The enzyme catalyses 3-methyl-2-oxobutanoate + (6R)-5,10-methylene-5,6,7,8-tetrahydrofolate + H2O = 2-dehydropantoate + (6S)-5,6,7,8-tetrahydrofolate. It functions in the pathway cofactor biosynthesis; (R)-pantothenate biosynthesis; (R)-pantoate from 3-methyl-2-oxobutanoate: step 1/2. Catalyzes the reversible reaction in which hydroxymethyl group from 5,10-methylenetetrahydrofolate is transferred onto alpha-ketoisovalerate to form ketopantoate. This is 3-methyl-2-oxobutanoate hydroxymethyltransferase from Escherichia fergusonii (strain ATCC 35469 / DSM 13698 / CCUG 18766 / IAM 14443 / JCM 21226 / LMG 7866 / NBRC 102419 / NCTC 12128 / CDC 0568-73).